We begin with the raw amino-acid sequence, 267 residues long: MTQTDLNNTEQKPVMVLKVGGALLQCDMGMSRLMQAAAKIIASGQPIIMVHGGGCLVDEQLKANGMITEKLDGLRVTPEAQIPVIVGALAGTSNKTLQAAAIKAGVTCLGMSLADAGMMNAKIKDPLLGLVGEVEPKDASYLEFVLAKGWMPIVSSIAISEQGEMLNVNADQAATALAKLVSGSLVLLSDVSGVLDGKGQLINSLNREQVNELTKIGVIEKGMKVKVEAALDVAESMGQAVQIASWRHAHQLIALCQGEAVGTQIQP.

Residues 53–54 (GG), arginine 75, and asparagine 167 each bind substrate.

The protein belongs to the acetylglutamate kinase family. ArgB subfamily.

Its subcellular location is the cytoplasm. The catalysed reaction is N-acetyl-L-glutamate + ATP = N-acetyl-L-glutamyl 5-phosphate + ADP. It participates in amino-acid biosynthesis; L-arginine biosynthesis; N(2)-acetyl-L-ornithine from L-glutamate: step 2/4. Catalyzes the ATP-dependent phosphorylation of N-acetyl-L-glutamate. In Shewanella pealeana (strain ATCC 700345 / ANG-SQ1), this protein is Acetylglutamate kinase.